Consider the following 206-residue polypeptide: MFIVIEGGEGSGKSSLAKALGDQLVAQDRKVLLTREPGGCLIGERLRDLILEPPHLELSRCCELFLFLGSRAQHIQEVIIPALRDGYIVICERFHDSTIVYQGIAEGLGADFVADLCSKVVGPTPFLPNFVLLLDIPADIGLQRKHRQKVFDKFEKKPLSYHNRIREGFLSLASADPSRYLVLDARESLASLIDKVMLHTQLGLCT.

7-14 lines the ATP pocket; sequence GGEGSGKS.

Belongs to the thymidylate kinase family.

It catalyses the reaction dTMP + ATP = dTDP + ADP. In terms of biological role, phosphorylation of dTMP to form dTDP in both de novo and salvage pathways of dTTP synthesis. This is Thymidylate kinase (tmk) from Chlamydia pneumoniae (Chlamydophila pneumoniae).